The primary structure comprises 310 residues: Malate dehydrogenase (310 aa).

NAD(+) contacts are provided by residues 7–12 (GAGHVG) and D32. Positions 81 and 87 each coordinate substrate. NAD(+)-binding positions include N94 and 117–119 (VSN). Substrate-binding residues include N119 and R150. H174 acts as the Proton acceptor in catalysis.

Belongs to the LDH/MDH superfamily. MDH type 3 family.

It carries out the reaction (S)-malate + NAD(+) = oxaloacetate + NADH + H(+). Catalyzes the reversible oxidation of malate to oxaloacetate. This chain is Malate dehydrogenase, found in Chlorobium phaeobacteroides (strain BS1).